Here is a 163-residue protein sequence, read N- to C-terminus: Transcription antitermination protein NusB (163 aa).

The disordered stretch occupies residues 1-21 (MTTFLSDSEHPQDVKAPPKSA).

Belongs to the NusB family.

Functionally, involved in transcription antitermination. Required for transcription of ribosomal RNA (rRNA) genes. Binds specifically to the boxA antiterminator sequence of the ribosomal RNA (rrn) operons. The sequence is that of Transcription antitermination protein NusB from Dechloromonas aromatica (strain RCB).